We begin with the raw amino-acid sequence, 152 residues long: ATP synthase epsilon chain 2 (152 aa).

The protein belongs to the ATPase epsilon chain family. F-type ATPases have 2 components, CF(1) - the catalytic core - and CF(0) - the membrane proton channel. CF(1) has five subunits: alpha(3), beta(3), gamma(1), delta(1), epsilon(1). CF(0) has three main subunits: a, b and c.

The protein localises to the cell inner membrane. Functionally, produces ATP from ADP in the presence of a proton gradient across the membrane. This chain is ATP synthase epsilon chain 2, found in Burkholderia orbicola (strain AU 1054).